A 468-amino-acid polypeptide reads, in one-letter code: Chromosomal replication initiator protein DnaA (468 aa).

Positions 1–84 (MSSSLWLQCL…RFEVGSRRVA (84 aa)) are domain I, interacts with DnaA modulators. A domain II region spans residues 84-131 (AAPKPAPTRTPADVAAESSAPAQLQARKPVHKTWDDDAQVIADINHRS). A compositionally biased stretch (low complexity) spans 85 to 95 (APKPAPTRTPA). Positions 85 to 104 (APKPAPTRTPADVAAESSAP) are disordered. The segment at 132–348 (NVNPKHKFNN…GALNRVIANA (217 aa)) is domain III, AAA+ region. ATP is bound by residues Gly176, Gly178, Lys179, and Thr180. Positions 349–468 (NFTGRPITID…YSNLIRTLSS (120 aa)) are domain IV, binds dsDNA.

Belongs to the DnaA family. In terms of assembly, oligomerizes as a right-handed, spiral filament on DNA at oriC.

It localises to the cytoplasm. Its function is as follows. Plays an essential role in the initiation and regulation of chromosomal replication. ATP-DnaA binds to the origin of replication (oriC) to initiate formation of the DNA replication initiation complex once per cell cycle. Binds the DnaA box (a 9 base pair repeat at the origin) and separates the double-stranded (ds)DNA. Forms a right-handed helical filament on oriC DNA; dsDNA binds to the exterior of the filament while single-stranded (ss)DNA is stabiized in the filament's interior. The ATP-DnaA-oriC complex binds and stabilizes one strand of the AT-rich DNA unwinding element (DUE), permitting loading of DNA polymerase. After initiation quickly degrades to an ADP-DnaA complex that is not apt for DNA replication. Binds acidic phospholipids. Functionally, complements a temperature-sensitive E.coli mutant, the DnaA consensus is 5'-TT(A/T)TNCACA-3'. The sequence is that of Chromosomal replication initiator protein DnaA from Vibrio harveyi (Beneckea harveyi).